Here is a 154-residue protein sequence, read N- to C-terminus: Endoribonuclease YbeY (154 aa).

3 residues coordinate Zn(2+): His113, His117, and His123.

This sequence belongs to the endoribonuclease YbeY family. It depends on Zn(2+) as a cofactor.

It localises to the cytoplasm. In terms of biological role, single strand-specific metallo-endoribonuclease involved in late-stage 70S ribosome quality control and in maturation of the 3' terminus of the 16S rRNA. This is Endoribonuclease YbeY from Vibrio campbellii (strain ATCC BAA-1116).